Consider the following 416-residue polypeptide: 5-hydroxytryptamine receptor 1A-beta (416 aa).

Residues 1–35 lie on the Extracellular side of the membrane; sequence MEGTNNTTGWTHFDSTSNRTSKSFDEEVKLSYQVV. 3 N-linked (GlcNAc...) asparagine glycosylation sites follow: N5, N6, and N18. Residues 36–56 form a helical membrane-spanning segment; it reads TSFLLGALILCSIFGNACVVA. Over 57 to 70 the chain is Cytoplasmic; sequence AIALERSLQNVANY. Residues 71-95 traverse the membrane as a helical segment; sequence LIGSLAVTDLMVSVLVLPMAALYQV. Over 96–104 the chain is Extracellular; the sequence is LNRWTLGQI. A helical membrane pass occupies residues 105–129; it reads PCDIFISLDMLCCTSSILHLCVIAL. Residues C106 and C189 are joined by a disulfide bond. 2 residues coordinate serotonin: D113 and C117. The short motif at 130–132 is the DRY motif; important for ligand-induced conformation changes element; sequence DRY. Over 130-149 the chain is Cytoplasmic; that stretch reads DRYWAITEPIDYMKKRTPRR. The helical transmembrane segment at 150–171 threads the bilayer; sequence AAVLISVTWLVGFSISIPPMLI. Topologically, residues 172–195 are extracellular; the sequence is MRSQPSSMAEDRANSKQCKITQDP. The chain crosses the membrane as a helical span at residues 196–218; it reads WYTIYSTFGAFYIPLTLMLVLYG. Over 219-340 the chain is Cytoplasmic; that stretch reads RIFKAARFRI…LARERKTVKT (122 aa). The 1D-myo-inositol 4-phosphate site is built by K339, T340, and G346. The helical transmembrane segment at 341–364 threads the bilayer; the sequence is LGIIMGTFILCWLPFFIVALVMPF. Topologically, residues 365–372 are extracellular; sequence CQESCFMP. Residues 373-397 form a helical membrane-spanning segment; it reads HWLKDVINWLGYSNSLLNPIIYAYF. The NPxxY motif; important for ligand-induced conformation changes and signaling signature appears at 390–394; that stretch reads NPIIY. 1D-myo-inositol 4-phosphate is bound by residues F397, N398, and K399. Residues 398 to 416 lie on the Cytoplasmic side of the membrane; that stretch reads NKDFQSAFKKIIKCHFCRA.

It belongs to the G-protein coupled receptor 1 family. 5-hydroxytryptamine receptor subfamily.

Its subcellular location is the cell membrane. Its activity is regulated as follows. G-protein coupled receptor activity is regulated by lipids: phosphatidylinositol 4-phosphate increases HTR1A-mediated activity. G-protein coupled receptor for 5-hydroxytryptamine (serotonin). Also functions as a receptor for various drugs and psychoactive substances. Ligand binding causes a conformation change that triggers signaling via guanine nucleotide-binding proteins (G proteins) and modulates the activity of downstream effectors, such as adenylate cyclase. HTR1A is coupled to G(i)/G(o) G alpha proteins and mediates inhibitory neurotransmission: signaling inhibits adenylate cyclase activity and activates a phosphatidylinositol-calcium second messenger system that regulates the release of Ca(2+) ions from intracellular stores. Beta-arrestin family members regulate signaling by mediating both receptor desensitization and resensitization processes. The polypeptide is 5-hydroxytryptamine receptor 1A-beta (htr1a-B) (Takifugu rubripes (Japanese pufferfish)).